A 169-amino-acid chain; its full sequence is CRISPR system Cmr subunit Cmr5 (169 aa).

This sequence belongs to the CRISPR system Cmr5 family. Monomer in isolation. Part of the type III-B Cmr ribonucleoprotein (RNP) complex, an elongated RNP with Cmr2 and Cmr3 as the base, with Cmr4 and Cmr5 forming a helical core along the mature crRNA (39 or 45 nt in length), while the complex is capped by Cmr6 and Cmr1. The 5' end of the crRNA is bound to Cmr2 and Cmr3, while Cmr6 and a Cmr1 subunit (Cmr1-1 or Cmr1-2) cap the 3' end of the crRNA. The target RNA lies antiparallel to the crRNA, with its 5' end near Cmr1 and Cmr6 and its 3' end near Cmr2 and Cmr3; major target cleavage occurs nears the junction of Cmr1/Cmr6 and Cmr4/Cmr, with minor cleavage occurring at 6 nt intervals which coincide with the proposed spacing of Cmr4 subunits. Interacts with Cmr4. Interacts with Cmr2, Cmr4 and Cmr6.

The protein resides in the cytoplasm. Its function is as follows. CRISPR (clustered regularly interspaced short palindromic repeat), is an adaptive immune system that provides protection against mobile genetic elements (viruses, transposable elements and conjugative plasmids). CRISPR clusters contain sequences complementary to antecedent mobile elements and target invading nucleic acids. CRISPR clusters are transcribed and processed into CRISPR RNA (crRNA), formerly called psiRNA (prokaryotic silencing) in this organism. Part of the Cmr ribonucleoprotein complex which has divalent cation-dependent endoribonuclease activity specific for ssRNA complementary to the crRNA (target NRA), generating 5' hydroxy- and 3' phosphate or 2'-3' cyclic phosphate termini. Cmr4 is probably the subunit that cleaves target RNA. Cmr complex does not cleave ssDNA complementary to the crRNA. Cleavage of invading RNA is guided by the crRNA; substrate cleavage occurs a fixed distance (14 nt) from the 3' end of the crRNA. In vitro reconstitution shows Cmr1-2 and Cmr5 are not absolutely necessary for target cleavage. This chain is CRISPR system Cmr subunit Cmr5, found in Pyrococcus furiosus (strain ATCC 43587 / DSM 3638 / JCM 8422 / Vc1).